Consider the following 284-residue polypeptide: ATP phosphoribosyltransferase (284 aa).

Belongs to the ATP phosphoribosyltransferase family. Long subfamily. In terms of assembly, equilibrium between an active dimeric form, an inactive hexameric form and higher aggregates. Interconversion between the various forms is largely reversible and is influenced by the natural substrates and inhibitors of the enzyme. The cofactor is Mg(2+).

The protein resides in the cytoplasm. The catalysed reaction is 1-(5-phospho-beta-D-ribosyl)-ATP + diphosphate = 5-phospho-alpha-D-ribose 1-diphosphate + ATP. It functions in the pathway amino-acid biosynthesis; L-histidine biosynthesis; L-histidine from 5-phospho-alpha-D-ribose 1-diphosphate: step 1/9. With respect to regulation, feedback inhibited by histidine. Its function is as follows. Catalyzes the condensation of ATP and 5-phosphoribose 1-diphosphate to form N'-(5'-phosphoribosyl)-ATP (PR-ATP). Has a crucial role in the pathway because the rate of histidine biosynthesis seems to be controlled primarily by regulation of HisG enzymatic activity. In Mycobacterium bovis (strain ATCC BAA-935 / AF2122/97), this protein is ATP phosphoribosyltransferase (hisG).